We begin with the raw amino-acid sequence, 68 residues long: Intracellular calcium channel modulator CCP-Ts (68 aa).

Positions 1-23 (MNPKLLIVIGLLLATGVCSFAKA) are cleaved as a signal peptide. Intrachain disulfides connect cysteine 33–cysteine 47, cysteine 40–cysteine 53, and cysteine 46–cysteine 62.

Belongs to the scorpion calcin-like family. As to expression, expressed by the venom gland. In intravenously injected mice, the labeled toxin has preference for heart, liver and lungs.

It is found in the secreted. The protein resides in the nucleus. In terms of biological role, cell penetrating peptide (CPP) that increases intracellular calcium release through the activation of nuclear inositol 1,4,5-trisphosphate receptors (ITPR) of cardiomyocytes, thereby causing an increase in the contraction frequency of these cells. In vivo, this toxin is not lethal to mice, hovewer anti-CPP serum reduces venom lethality, suggesting that this toxin is lethal when it acts in synergy with other venom components. In Tityus serrulatus (Brazilian scorpion), this protein is Intracellular calcium channel modulator CCP-Ts.